Here is a 311-residue protein sequence, read N- to C-terminus: Urease accessory protein UreD 3 (311 aa).

Belongs to the UreD family. UreD, UreF and UreG form a complex that acts as a GTP-hydrolysis-dependent molecular chaperone, activating the urease apoprotein by helping to assemble the nickel containing metallocenter of UreC. The UreE protein probably delivers the nickel.

Its subcellular location is the cytoplasm. Its function is as follows. Required for maturation of urease via the functional incorporation of the urease nickel metallocenter. The sequence is that of Urease accessory protein UreD 3 from Methylorubrum populi (strain ATCC BAA-705 / NCIMB 13946 / BJ001) (Methylobacterium populi).